We begin with the raw amino-acid sequence, 355 residues long: Serine acetyltransferase 4 (355 aa).

It belongs to the transferase hexapeptide repeat family. Homomultimer. In terms of tissue distribution, localized in vascular tissues, particularly in phloem.

It localises to the cytoplasm. The enzyme catalyses L-serine + acetyl-CoA = O-acetyl-L-serine + CoA. Its pathway is amino-acid biosynthesis; L-cysteine biosynthesis; L-cysteine from L-serine: step 1/2. Feedback inhibitions by L-Ser and acetyl-CoA. The chain is Serine acetyltransferase 4 from Arabidopsis thaliana (Mouse-ear cress).